The sequence spans 224 residues: Ribosome maturation factor RimM (224 aa).

Positions Met1–Pro12 are enriched in low complexity. Disordered stretches follow at residues Met1–Val46 and Val204–Gly224. The PRC barrel domain maps to Glu137–Leu211.

It belongs to the RimM family. As to quaternary structure, binds ribosomal protein uS19.

The protein resides in the cytoplasm. Its function is as follows. An accessory protein needed during the final step in the assembly of 30S ribosomal subunit, possibly for assembly of the head region. Essential for efficient processing of 16S rRNA. May be needed both before and after RbfA during the maturation of 16S rRNA. It has affinity for free ribosomal 30S subunits but not for 70S ribosomes. This is Ribosome maturation factor RimM from Methylorubrum populi (strain ATCC BAA-705 / NCIMB 13946 / BJ001) (Methylobacterium populi).